Here is a 484-residue protein sequence, read N- to C-terminus: UDP-N-acetylmuramate--L-alanine ligase (484 aa).

ATP is bound at residue 126 to 132; the sequence is GTHGKTT.

The protein belongs to the MurCDEF family.

The protein resides in the cytoplasm. It carries out the reaction UDP-N-acetyl-alpha-D-muramate + L-alanine + ATP = UDP-N-acetyl-alpha-D-muramoyl-L-alanine + ADP + phosphate + H(+). Its pathway is cell wall biogenesis; peptidoglycan biosynthesis. In terms of biological role, cell wall formation. This chain is UDP-N-acetylmuramate--L-alanine ligase, found in Aeromonas hydrophila subsp. hydrophila (strain ATCC 7966 / DSM 30187 / BCRC 13018 / CCUG 14551 / JCM 1027 / KCTC 2358 / NCIMB 9240 / NCTC 8049).